Consider the following 121-residue polypeptide: Centrocin 2 (121 aa).

An N-terminal signal peptide occupies residues 1–20 (MMIKIAVVLCAVMATSMVFA). A propeptide spanning residues 21 to 50 (NDVKEQELADLLDLLISEEVSSPDDAVAES) is cleaved from the precursor. 2 positions are modified to 6'-bromotryptophan: Trp51 and Trp59. An intrachain disulfide couples Cys77 to Cys112. Positions 83–106 (SPQEARAKVLEAFPEMKESDLDEE) are excised as a propeptide. Pyrrolidone carboxylic acid is present on Gln107. His119 carries the post-translational modification Histidine amide.

In terms of assembly, heterodimer of a light and a heavy chain, probably disulfide-linked.

Functionally, has antimicrobial activity against Gram-negative bacteria, Gram-positive bacteria and against fungi with minimum inhibitory concentration (MIC) between 0.78 uM and 50 uM. Shows little hemolytic activity at concentrations up to 12.5 uM but &gt;50% lysis at 100 uM. The sequence is that of Centrocin 2 from Echinus esculentus (Sea urchin).